Consider the following 557-residue polypeptide: Protein Red (557 aa).

The disordered stretch occupies residues 1 to 90; it reads MPERDSEPFS…YAKLRQQEIE (90 aa). Over residues 16–25 the composition is skewed to basic and acidic residues; sequence DGHDVDDPHS. A compositionally biased stretch (low complexity) spans 42–53; that stretch reads TPRAAPTSAPPS. An N6-acetyllysine mark is found at Lys-98 and Lys-137. Lys-151 is covalently cross-linked (Glycyl lysine isopeptide (Lys-Gly) (interchain with G-Cter in SUMO2)). The disordered stretch occupies residues 181-205; it reads KEKEEEELMEKPQKETKKDEDPENK. Ser-287 carries the phosphoserine modification. Over residues 294 to 303 the composition is skewed to basic residues; that stretch reads RNKKLKKKDK. The tract at residues 294–402 is disordered; it reads RNKKLKKKDK…PMDVDKGPGS (109 aa). Positions 304-313 are enriched in basic and acidic residues; that stretch reads GKLEEKKPPE. Glycyl lysine isopeptide (Lys-Gly) (interchain with G-Cter in SUMO2) cross-links involve residues Lys-310 and Lys-331. The span at 332-398 shows a compositional bias: basic and acidic residues; sequence TPRDKERERY…VDDEPMDVDK (67 aa). 17 repeat units span residues 342–343, 344–345, 346–347, 348–349, 350–351, 352–353, 354–355, 356–357, 358–359, 360–361, 362–363, 364–365, 366–367, 368–369, 370–371, 372–373, and 374–375. Residues 342–375 form a 17 X 2 AA tandem repeats of R-[ED] region; that stretch reads RERERDRERDRDRERDRERDRERERERDRERERE. Glycyl lysine isopeptide (Lys-Gly) (interchain with G-Cter in SUMO2) cross-links involve residues Lys-386, Lys-388, Lys-404, and Lys-408. Residues Ser-417 and Ser-460 each carry the phosphoserine modification. The residue at position 485 (Thr-485) is a Phosphothreonine. Residues Lys-496, Lys-501, and Lys-509 each participate in a glycyl lysine isopeptide (Lys-Gly) (interchain with G-Cter in SUMO2) cross-link. Phosphoserine is present on Ser-536. Residues Lys-541, Lys-543, Lys-544, and Lys-553 each participate in a glycyl lysine isopeptide (Lys-Gly) (interchain with G-Cter in SUMO2) cross-link.

It belongs to the RED family. Component of the spliceosome B complex. Interacts with SMU1. Interacts with MAD1L1. May interact with DHX15.

It localises to the nucleus. Its subcellular location is the nucleoplasm. The protein resides in the chromosome. The protein localises to the cytoplasm. It is found in the cytoskeleton. It localises to the spindle pole. In terms of biological role, involved in pre-mRNA splicing as a component of the spliceosome. Auxiliary spliceosomal protein that regulates selection of alternative splice sites in a small set of target pre-mRNA species. Required for normal mitotic cell cycle progression. Recruits MAD1L1 and MAD2L1 to kinetochores, and is required to trigger the spindle assembly checkpoint. Required for normal accumulation of SMU1. In Rattus norvegicus (Rat), this protein is Protein Red (Ik).